A 298-amino-acid chain; its full sequence is UDP-3-O-acyl-N-acetylglucosamine deacetylase (298 aa).

Zn(2+) is bound by residues His75, His232, and Asp236. His259 functions as the Proton donor in the catalytic mechanism.

Belongs to the LpxC family. Requires Zn(2+) as cofactor.

The catalysed reaction is a UDP-3-O-[(3R)-3-hydroxyacyl]-N-acetyl-alpha-D-glucosamine + H2O = a UDP-3-O-[(3R)-3-hydroxyacyl]-alpha-D-glucosamine + acetate. It functions in the pathway glycolipid biosynthesis; lipid IV(A) biosynthesis; lipid IV(A) from (3R)-3-hydroxytetradecanoyl-[acyl-carrier-protein] and UDP-N-acetyl-alpha-D-glucosamine: step 2/6. Catalyzes the hydrolysis of UDP-3-O-myristoyl-N-acetylglucosamine to form UDP-3-O-myristoylglucosamine and acetate, the committed step in lipid A biosynthesis. In Wolinella succinogenes (strain ATCC 29543 / DSM 1740 / CCUG 13145 / JCM 31913 / LMG 7466 / NCTC 11488 / FDC 602W) (Vibrio succinogenes), this protein is UDP-3-O-acyl-N-acetylglucosamine deacetylase.